The chain runs to 123 residues: Small ribosomal subunit protein uS12 (123 aa).

Position 89 is a 3-methylthioaspartic acid (Asp89). Residues 104–123 form a disordered region; sequence TAGVKDRKQARSKYGAKRPK. Residues 113–123 are compositionally biased toward basic residues; the sequence is ARSKYGAKRPK.

It belongs to the universal ribosomal protein uS12 family. In terms of assembly, part of the 30S ribosomal subunit. Contacts proteins S8 and S17. May interact with IF1 in the 30S initiation complex.

Functionally, with S4 and S5 plays an important role in translational accuracy. Its function is as follows. Interacts with and stabilizes bases of the 16S rRNA that are involved in tRNA selection in the A site and with the mRNA backbone. Located at the interface of the 30S and 50S subunits, it traverses the body of the 30S subunit contacting proteins on the other side and probably holding the rRNA structure together. The combined cluster of proteins S8, S12 and S17 appears to hold together the shoulder and platform of the 30S subunit. This Chromobacterium violaceum (strain ATCC 12472 / DSM 30191 / JCM 1249 / CCUG 213 / NBRC 12614 / NCIMB 9131 / NCTC 9757 / MK) protein is Small ribosomal subunit protein uS12.